A 912-amino-acid polypeptide reads, in one-letter code: Isoleucine--tRNA ligase (912 aa).

A 'HIGH' region motif is present at residues 57-67 (PYANGDIHLGT). Glutamate 549 contributes to the L-isoleucyl-5'-AMP binding site. The 'KMSKS' region signature appears at 590–594 (KMSKS). Lysine 593 contacts ATP. Residues cysteine 880, cysteine 883, cysteine 900, and cysteine 903 each coordinate Zn(2+).

Belongs to the class-I aminoacyl-tRNA synthetase family. IleS type 1 subfamily. Monomer. Zn(2+) serves as cofactor.

Its subcellular location is the cytoplasm. It catalyses the reaction tRNA(Ile) + L-isoleucine + ATP = L-isoleucyl-tRNA(Ile) + AMP + diphosphate. Functionally, catalyzes the attachment of isoleucine to tRNA(Ile). As IleRS can inadvertently accommodate and process structurally similar amino acids such as valine, to avoid such errors it has two additional distinct tRNA(Ile)-dependent editing activities. One activity is designated as 'pretransfer' editing and involves the hydrolysis of activated Val-AMP. The other activity is designated 'posttransfer' editing and involves deacylation of mischarged Val-tRNA(Ile). The sequence is that of Isoleucine--tRNA ligase from Fervidobacterium pennivorans (strain DSM 9078 / Ven5).